The sequence spans 296 residues: ATP phosphoribosyltransferase (296 aa).

Belongs to the ATP phosphoribosyltransferase family.

Its subcellular location is the cytoplasm. The enzyme catalyses 1-(5-phospho-beta-D-ribosyl)-ATP + diphosphate = 5-phospho-alpha-D-ribose 1-diphosphate + ATP. Its pathway is amino-acid biosynthesis; L-histidine biosynthesis; L-histidine from 5-phospho-alpha-D-ribose 1-diphosphate: step 1/9. In terms of biological role, catalyzes the condensation of ATP and 5-phosphoribose 1-diphosphate to form N'-(5'-phosphoribosyl)-ATP (PR-ATP). Has a crucial role in the pathway because the rate of histidine biosynthesis seems to be controlled primarily by regulation of the enzymatic activity. This is ATP phosphoribosyltransferase (HIS1) from Yarrowia lipolytica (strain CLIB 122 / E 150) (Yeast).